The primary structure comprises 600 residues: Brain-enriched guanylate kinase-associated protein (600 aa).

Met1 bears the N-acetylmethionine mark. Position 137 is a phosphotyrosine (Tyr137). Residues 192–222 form a disordered region; sequence PGSLSSRMSDASARDLGYRDGVEKSGPRPPY. Residue Ser200 is modified to Phosphoserine. Residues 203–217 are compositionally biased toward basic and acidic residues; sequence SARDLGYRDGVEKSG. 2 positions are modified to phosphoserine: Ser229 and Ser246. Thr249 is modified (phosphothreonine). Ser265 is modified (phosphoserine). The segment at 298-317 is disordered; that stretch reads SSYSSFSATSEEKEHAQAGT. Phosphoserine is present on Ser372. Position 380 is an asymmetric dimethylarginine (Arg380). Residues Ser463, Ser473, Ser483, Ser485, Ser508, Ser510, and Ser514 each carry the phosphoserine modification. Positions 537 to 590 are disordered; sequence GAGSSPEPEHGSRESLEPSSMEASPEMHPPTRLSPQQAFPRTGGSGLSRKDSLT. The segment covering 543 to 552 has biased composition (basic and acidic residues); it reads EPEHGSRESL. Ser560 and Ser570 each carry phosphoserine.

In terms of assembly, interacts with DLG4 and DLGAP1 and forms a ternary complex.

It localises to the cytoplasm. The protein resides in the membrane. May sustain the structure of the postsynaptic density (PSD). The polypeptide is Brain-enriched guanylate kinase-associated protein (Begain) (Mus musculus (Mouse)).